We begin with the raw amino-acid sequence, 4471 residues long: Dynein axonemal heavy chain 10 (4471 aa).

The segment at 1–1793 (MVPEEVEVEI…NIRQCTGTFG (1793 aa)) is stem. The disordered stretch occupies residues 46–65 (TESLGQPLNREDEEMDKEIS). Coiled coils occupy residues 203–223 (NVQKFASNIQRTMQQLEGEIK), 602–622 (QEVKQKYLEVGRTMKEYEDRK), 1071–1106 (KLLNESAKEELYNLHEEMEHLAKNLRKIPNTLEDLK), and 1217–1245 (VELLGVYERELARHEKSRQELANAEKLFD). N-linked (GlcNAc...) asparagine glycosylation occurs at N1074. One copy of the TPR 1 repeat lies at 1221 to 1254 (GVYERELARHEKSRQELANAEKLFDLPITMYPEL). 4 AAA regions span residues 1794-2015 (YGYE…VLVM), 2075-2294 (DAVE…VIVE), 2417-2665 (IHAP…VFNG), and 2765-3014 (EYNE…LRRS). The GPAGTGKT motif motif lies at 1832-1839 (GPAGTGKT). 1832–1839 (GPAGTGKT) serves as a coordination point for ATP. A CFDEFNR motif motif is present at residues 1882–1888 (CFDEFNR). Residues 2113-2120 (GPTRGGKS) and 2455-2462 (GESGTSKT) each bind ATP. TPR repeat units follow at residues 2736 to 2769 (MALHEGEPRIYEDIQDYEAAKALFQEILEEYNES) and 2771 to 2797 (TKMNLVLFDDALEHLTRVHRIIRMDRG). Positions 2747-2770 (EDIQDYEAAKALFQEILEEYNESN) form a coiled coil. Residue 2803–2810 (GVGGSGKQ) coordinates ATP. The interval 3029–3313 (YSKLLDEKTQ…QKLQEEAEIM (285 aa)) is stalk. 3 coiled-coil regions span residues 3045–3131 (KRLD…LAEV), 3257–3327 (KREK…ISGL), and 3567–3638 (ERRE…EKTA). The tract at residues 3399–3629 (LTDDVEISRW…TKSKATEVSE (231 aa)) is AAA 5. Residues 3802–3837 (WQEWYDLDSLEQFPVPLGYDNNITPFQKLLILRCFR) form a TPR 4 repeat. The AAA 6 stretch occupies residues 3845 to 4062 (VTDYVTVTMG…FQVCMEILNT (218 aa)). One copy of the TPR 5 repeat lies at 4074–4108 (RIPWGSLKYLIGEVMYGGRAIDSFDRRILTIYMDE). The stretch at 4235 to 4260 (LLQELERFNKLVVRMTKSLAELQRAL) forms a coiled coil.

This sequence belongs to the dynein heavy chain family. As to quaternary structure, consists of at least two heavy chains and a number of intermediate and light chains. In terms of tissue distribution, expressed primarily in trachea and testis, 2 tissues containing axonemal structures. Also expressed in brain but not in adult heart.

It localises to the cytoplasm. The protein resides in the cytoskeleton. Its subcellular location is the cilium axoneme. Force generating protein of respiratory cilia. Produces force towards the minus ends of microtubules. Dynein has ATPase activity; the force-producing power stroke is thought to occur on release of ADP. Involved in sperm motility; implicated in sperm flagellar assembly. Probable inner arm dynein heavy chain. This Homo sapiens (Human) protein is Dynein axonemal heavy chain 10 (DNAH10).